A 187-amino-acid polypeptide reads, in one-letter code: UPF0301 protein YqgE (187 aa).

It belongs to the UPF0301 (AlgH) family.

The protein is UPF0301 protein YqgE of Escherichia fergusonii (strain ATCC 35469 / DSM 13698 / CCUG 18766 / IAM 14443 / JCM 21226 / LMG 7866 / NBRC 102419 / NCTC 12128 / CDC 0568-73).